We begin with the raw amino-acid sequence, 457 residues long: Bifunctional protein GlmU (457 aa).

Residues 1-230 (MPLSLPLHIV…AQEVEGVNDL (230 aa)) form a pyrophosphorylase region. Residues 12–15 (LAAG), Lys26, Gln78, 83–84 (GT), 105–107 (YGD), Gly140, Glu155, Asn170, and Asn228 contribute to the UDP-N-acetyl-alpha-D-glucosamine site. Asp107 contacts Mg(2+). Residue Asn228 participates in Mg(2+) binding. Residues 231–251 (WQLTQLERAWQIRAARALCLQ) form a linker region. The tract at residues 252–457 (GARVADPARL…DGWQRPKKKT (206 aa)) is N-acetyltransferase. 2 residues coordinate UDP-N-acetyl-alpha-D-glucosamine: Arg334 and Lys352. His364 serves as the catalytic Proton acceptor. UDP-N-acetyl-alpha-D-glucosamine contacts are provided by Tyr367 and Asn378. Acetyl-CoA-binding positions include Ala381, 387-388 (NY), Ser406, Ala424, and Arg441.

The protein in the N-terminal section; belongs to the N-acetylglucosamine-1-phosphate uridyltransferase family. In the C-terminal section; belongs to the transferase hexapeptide repeat family. Homotrimer. Requires Mg(2+) as cofactor.

The protein localises to the cytoplasm. The enzyme catalyses alpha-D-glucosamine 1-phosphate + acetyl-CoA = N-acetyl-alpha-D-glucosamine 1-phosphate + CoA + H(+). It carries out the reaction N-acetyl-alpha-D-glucosamine 1-phosphate + UTP + H(+) = UDP-N-acetyl-alpha-D-glucosamine + diphosphate. The protein operates within nucleotide-sugar biosynthesis; UDP-N-acetyl-alpha-D-glucosamine biosynthesis; N-acetyl-alpha-D-glucosamine 1-phosphate from alpha-D-glucosamine 6-phosphate (route II): step 2/2. It participates in nucleotide-sugar biosynthesis; UDP-N-acetyl-alpha-D-glucosamine biosynthesis; UDP-N-acetyl-alpha-D-glucosamine from N-acetyl-alpha-D-glucosamine 1-phosphate: step 1/1. It functions in the pathway bacterial outer membrane biogenesis; LPS lipid A biosynthesis. Catalyzes the last two sequential reactions in the de novo biosynthetic pathway for UDP-N-acetylglucosamine (UDP-GlcNAc). The C-terminal domain catalyzes the transfer of acetyl group from acetyl coenzyme A to glucosamine-1-phosphate (GlcN-1-P) to produce N-acetylglucosamine-1-phosphate (GlcNAc-1-P), which is converted into UDP-GlcNAc by the transfer of uridine 5-monophosphate (from uridine 5-triphosphate), a reaction catalyzed by the N-terminal domain. The sequence is that of Bifunctional protein GlmU from Xylella fastidiosa (strain M23).